A 64-amino-acid chain; its full sequence is Large ribosomal subunit protein bL33 (64 aa).

The protein belongs to the bacterial ribosomal protein bL33 family.

The chain is Large ribosomal subunit protein bL33 from Thermosynechococcus vestitus (strain NIES-2133 / IAM M-273 / BP-1).